The primary structure comprises 190 residues: Potassium-transporting ATPase KdpC subunit (190 aa).

A helical membrane pass occupies residues 10–30; sequence TFLFLLLITGGVYPLLTTALG.

It belongs to the KdpC family. In terms of assembly, the system is composed of three essential subunits: KdpA, KdpB and KdpC.

Its subcellular location is the cell inner membrane. Functionally, part of the high-affinity ATP-driven potassium transport (or Kdp) system, which catalyzes the hydrolysis of ATP coupled with the electrogenic transport of potassium into the cytoplasm. This subunit acts as a catalytic chaperone that increases the ATP-binding affinity of the ATP-hydrolyzing subunit KdpB by the formation of a transient KdpB/KdpC/ATP ternary complex. This is Potassium-transporting ATPase KdpC subunit from Escherichia coli O7:K1 (strain IAI39 / ExPEC).